A 586-amino-acid polypeptide reads, in one-letter code: SPbeta prophage-derived uncharacterized protein YorA (586 aa).

PbH1 repeat units lie at residues 108 to 147, 148 to 170, 184 to 206, 207 to 235, 246 to 268, 288 to 313, 320 to 341, 364 to 384, 387 to 410, 411 to 432, 435 to 456, 481 to 504, and 505 to 531; these read AENVIIRGGRIIGDRYQHDYSLIDTDRKTHEWGFGIHVHG, SKNVLIENVQISDCIGDNIWIAA, SKSVTVRKCELKRGRRNNLATNG, CEGLLVEDCDIEEAGGDTIGPQLGIDLEG, PYELTISDCRFRKNGRGSVTAHT, STDVSIKGNKIINEGGSKEYGIDSVG, GNRIQITDNNIQGFKIGMMIRG, AEDVSISNNRIQDSDCIQIQV, SSDIKVSNNKGKGTTSAYAIKVMD, SNDVKFLNNTFSNLYGGLYCER, AVRIKLNDFLLSGKGYGIYWDK, MYNIRISDNQIYNCKAIIAIHLIG, and GSEHMVRGNEIMFNRDSDQGYGIYLNG.

In Bacillus subtilis (strain 168), this protein is SPbeta prophage-derived uncharacterized protein YorA (yorA).